The primary structure comprises 493 residues: Glutamate--tRNA ligase (493 aa).

The 'HIGH' region motif lies at 9 to 19 (PSPTGDPHVGT). The short motif at 249–253 (KLSKR) is the 'KMSKS' region element. ATP is bound at residue lysine 252.

It belongs to the class-I aminoacyl-tRNA synthetase family. Glutamate--tRNA ligase type 1 subfamily. Monomer.

It localises to the cytoplasm. It catalyses the reaction tRNA(Glu) + L-glutamate + ATP = L-glutamyl-tRNA(Glu) + AMP + diphosphate. Its function is as follows. Catalyzes the attachment of glutamate to tRNA(Glu) in a two-step reaction: glutamate is first activated by ATP to form Glu-AMP and then transferred to the acceptor end of tRNA(Glu). The sequence is that of Glutamate--tRNA ligase from Marinobacter nauticus (strain ATCC 700491 / DSM 11845 / VT8) (Marinobacter aquaeolei).